Consider the following 396-residue polypeptide: Mitogen-activated protein kinase mpkC (396 aa).

The region spanning 20 to 299 (YSDLQPVGLG…AAKALEHPYL (280 aa)) is the Protein kinase domain. Residues 26 to 34 (VGLGAFGLV) and K49 each bind ATP. Residue D141 is the Proton acceptor of the active site. T171 carries the phosphothreonine modification. Residues 171–173 (TGY) carry the TXY motif. Y173 is subject to Phosphotyrosine.

Belongs to the protein kinase superfamily. Ser/Thr protein kinase family. MAP kinase subfamily. HOG1 sub-subfamily. Mg(2+) is required as a cofactor. In terms of processing, dually phosphorylated on Thr-171 and Tyr-173, which activates the enzyme.

The catalysed reaction is L-seryl-[protein] + ATP = O-phospho-L-seryl-[protein] + ADP + H(+). The enzyme catalyses L-threonyl-[protein] + ATP = O-phospho-L-threonyl-[protein] + ADP + H(+). Activated by tyrosine and threonine phosphorylation. Mitogen-activated protein kinase required for growth on media where sorbitol or mannitol is the sole carbon source. This is Mitogen-activated protein kinase mpkC (mpkC) from Aspergillus niger (strain ATCC MYA-4892 / CBS 513.88 / FGSC A1513).